The sequence spans 329 residues: Mitochondrial substrate carrier family protein Q (329 aa).

3 Solcar repeats span residues 18–115, 125–206, and 216–310; these read VEAL…LKSI, LGTI…LRAL, and LGGL…VVIH. The next 6 helical transmembrane spans lie at 21 to 41, 95 to 115, 131 to 151, 175 to 195, 221 to 241, and 298 to 318; these read LGHAISGGVAGMAAIALTYPF, LIGIGASSFVYYYWYTLLKSI, LAIAALAGCANVLTTLPIWVV, GFGGLYKGLIPALILVSNPSV, VFILGAIAKLIAGIVTYPYLL, and AFMFLVKDKVVIHAVAILFYL.

This sequence belongs to the mitochondrial carrier (TC 2.A.29) family.

It localises to the peroxisome membrane. Functionally, may have transport activity. This Dictyostelium discoideum (Social amoeba) protein is Mitochondrial substrate carrier family protein Q (mcfQ).